The chain runs to 40 residues: ANDIRPLRDFEDEEAQEFHQAAVQAFFLYVAVAFVAHLPV.

Over 1–20 (ANDIRPLRDFEDEEAQEFHQ) the chain is Cytoplasmic. A bacteriochlorophyll is bound by residues His19 and His37. The helical transmembrane segment at 21–40 (AAVQAFFLYVAVAFVAHLPV) threads the bilayer.

Belongs to the antenna complex beta subunit family. As to quaternary structure, the core complex is formed by different alpha and beta chains, binding bacteriochlorophyll molecules, and arranged most probably in tetrameric structures disposed around the reaction center. The non-pigmented gamma chains may constitute additional components.

The protein localises to the cell inner membrane. Functionally, antenna complexes are light-harvesting systems, which transfer the excitation energy to the reaction centers. The protein is Light-harvesting protein B800/830/1020 beta-1 chain of Halorhodospira halochloris (Ectothiorhodospira halochloris).